The following is a 189-amino-acid chain: MRPPRGGGSFRGRGGRDNGGRGRGRGRGRGRFGGGNYDEGPPSEVVEVATFLHACEGDAVFKLSNVKIPHFNAPIYLQNKTQIGRVDEIFGPINESLFSIKMREGIVATSYSQGDKFFISPEKLLPLSRFLPQPKGQSGGRGEGRVPPRGRGPPRGRGNFRGRGAPRGASRGFQPRGGPRGGFRGRGRA.

A compositionally biased stretch (gly residues) spans 1–12 (MRPPRGGGSFRG). Disordered stretches follow at residues 1–39 (MRPP…NYDE) and 129–189 (RFLP…RGRA). Over residues 162–177 (GRGAPRGASRGFQPRG) the composition is skewed to low complexity.

The protein belongs to the GAR1 family. Component of the small nucleolar ribonucleoprotein particle containing H/ACA-type snoRNAs (H/ACA snoRNPs).

The protein localises to the nucleus. The protein resides in the nucleolus. In terms of biological role, required for ribosome biogenesis. Part of a complex which catalyzes pseudouridylation of rRNA. This involves the isomerization of uridine such that the ribose is subsequently attached to C5, instead of the normal N1. Pseudouridine ('psi') residues may serve to stabilize the conformation of rRNAs. The chain is H/ACA ribonucleoprotein complex subunit 1-like protein 2 from Arabidopsis thaliana (Mouse-ear cress).